Reading from the N-terminus, the 104-residue chain is uncharacterized protein (104 aa).

The chain crosses the membrane as a helical span at residues 72 to 92 (LIFSHNIVIIVSPIYMISFII).

It is found in the membrane. This is an uncharacterized protein from Saccharomyces cerevisiae (strain ATCC 204508 / S288c) (Baker's yeast).